Consider the following 315-residue polypeptide: Protoheme IX farnesyltransferase (315 aa).

The next 9 membrane-spanning stretches (helical) occupy residues 38-58 (IIEL…QGVP), 62-82 (LVLL…ALNM), 111-131 (LVFG…TVNW), 132-152 (LSAW…TMIL), 159-179 (NIVW…SAVT), 184-204 (WAPV…YWPL), 233-253 (IVIY…LGYT), 255-275 (WFYT…AHGL), and 293-313 (LFHW…VDPF).

This sequence belongs to the UbiA prenyltransferase family. Protoheme IX farnesyltransferase subfamily.

Its subcellular location is the cell membrane. The enzyme catalyses heme b + (2E,6E)-farnesyl diphosphate + H2O = Fe(II)-heme o + diphosphate. It functions in the pathway porphyrin-containing compound metabolism; heme O biosynthesis; heme O from protoheme: step 1/1. Its function is as follows. Converts heme B (protoheme IX) to heme O by substitution of the vinyl group on carbon 2 of heme B porphyrin ring with a hydroxyethyl farnesyl side group. The protein is Protoheme IX farnesyltransferase of Streptomyces coelicolor (strain ATCC BAA-471 / A3(2) / M145).